The sequence spans 358 residues: DNA primase large subunit PriL (358 aa).

4 residues coordinate [4Fe-4S] cluster: C234, C306, C315, and C322. Positions 335–358 are disordered; the sequence is KLDDTDEEELVDWREDEGEEEADA. The segment covering 338–358 has biased composition (acidic residues); the sequence is DTDEEELVDWREDEGEEEADA.

The protein belongs to the eukaryotic-type primase large subunit family. As to quaternary structure, heterodimer of a small subunit (PriS) and a large subunit (PriL). The cofactor is [4Fe-4S] cluster.

Regulatory subunit of DNA primase, an RNA polymerase that catalyzes the synthesis of short RNA molecules used as primers for DNA polymerase during DNA replication. Stabilizes and modulates the activity of the small subunit, increasing the rate of DNA synthesis, and conferring RNA synthesis capability. The DNA polymerase activity may enable DNA primase to also catalyze primer extension after primer synthesis. May also play a role in DNA repair. In Haloarcula marismortui (strain ATCC 43049 / DSM 3752 / JCM 8966 / VKM B-1809) (Halobacterium marismortui), this protein is DNA primase large subunit PriL.